A 219-amino-acid chain; its full sequence is 3,4-dihydroxy-2-butanone 4-phosphate synthase (219 aa).

Residues 28–29 (RE), Asp33, 140–144 (REGHT), and Glu164 each bind D-ribulose 5-phosphate. Position 29 (Glu29) interacts with Mg(2+). His143 contacts Mg(2+).

This sequence belongs to the DHBP synthase family. As to quaternary structure, homodimer. Mg(2+) serves as cofactor. The cofactor is Mn(2+).

It catalyses the reaction D-ribulose 5-phosphate = (2S)-2-hydroxy-3-oxobutyl phosphate + formate + H(+). It functions in the pathway cofactor biosynthesis; riboflavin biosynthesis; 2-hydroxy-3-oxobutyl phosphate from D-ribulose 5-phosphate: step 1/1. In terms of biological role, catalyzes the conversion of D-ribulose 5-phosphate to formate and 3,4-dihydroxy-2-butanone 4-phosphate. In Methanocorpusculum labreanum (strain ATCC 43576 / DSM 4855 / Z), this protein is 3,4-dihydroxy-2-butanone 4-phosphate synthase.